The following is a 186-amino-acid chain: Probable calcium-binding protein CML25 (186 aa).

The segment covering 1–17 (MFNKNQGSNGGSSSNVG) has biased composition (low complexity). Residues 1 to 23 (MFNKNQGSNGGSSSNVGIGADSP) are disordered. EF-hand domains are found at residues 33–68 (TEIR…LGHE), 69–104 (VPEE…GMDQ), 106–141 (DVLE…LGDE), and 142–177 (CSIA…GSRR). Ca(2+) is bound by residues aspartate 46, asparagine 48, aspartate 50, lysine 52, and glutamate 57. Aspartate 119, aspartate 121, asparagine 123, serine 125, glutamate 130, aspartate 155, aspartate 157, aspartate 159, threonine 161, and glutamate 166 together coordinate Ca(2+).

In terms of biological role, potential calcium sensor. The polypeptide is Probable calcium-binding protein CML25 (CML25) (Arabidopsis thaliana (Mouse-ear cress)).